The primary structure comprises 347 residues: tRNA N6-adenosine threonylcarbamoyltransferase (347 aa).

The Fe cation site is built by histidine 111 and histidine 115. Substrate is bound by residues 134 to 138, aspartate 167, glycine 180, and asparagine 276; that span reads LVSGG. Aspartate 304 lines the Fe cation pocket.

This sequence belongs to the KAE1 / TsaD family. Fe(2+) is required as a cofactor.

It is found in the cytoplasm. The catalysed reaction is L-threonylcarbamoyladenylate + adenosine(37) in tRNA = N(6)-L-threonylcarbamoyladenosine(37) in tRNA + AMP + H(+). Its function is as follows. Required for the formation of a threonylcarbamoyl group on adenosine at position 37 (t(6)A37) in tRNAs that read codons beginning with adenine. Is involved in the transfer of the threonylcarbamoyl moiety of threonylcarbamoyl-AMP (TC-AMP) to the N6 group of A37, together with TsaE and TsaB. TsaD likely plays a direct catalytic role in this reaction. This is tRNA N6-adenosine threonylcarbamoyltransferase from Nitrosospira multiformis (strain ATCC 25196 / NCIMB 11849 / C 71).